Consider the following 258-residue polypeptide: Microtubule-associated protein RP/EB family member 1 (258 aa).

One can recognise a Calponin-homology (CH) domain in the interval 14-116 (NLSRHDMLAW…FVQWFKKFFD (103 aa)). The EB1 C-terminal domain maps to 175-245 (KKAAGDDESA…LYATDEGFVI (71 aa)).

It belongs to the MAPRE family.

Its subcellular location is the cytoplasm. The protein localises to the cytoskeleton. The protein resides in the microtubule organizing center. It is found in the centrosome. It localises to the golgi apparatus. Its subcellular location is the spindle. The protein localises to the spindle pole. In terms of biological role, plus-end tracking protein (+TIP) that binds to the plus-end of microtubules and regulates the dynamics of the microtubule cytoskeleton. Promotes cytoplasmic microtubule nucleation and elongation. Involved in mitotic spindle positioning by stabilizing microtubules and promoting dynamic connection between astral microtubules and the cortex during mitotic chromosome segregation. This Gallus gallus (Chicken) protein is Microtubule-associated protein RP/EB family member 1 (MAPRE1).